The sequence spans 119 residues: uncharacterized protein (119 aa).

2 consecutive transmembrane segments (helical) span residues 53–73 (AATILMAWLLLTICFIPSFLA) and 92–112 (FITHVYCLMIKPFVLYFWFLF).

It is found in the membrane. This is an uncharacterized protein from Saccharomyces cerevisiae (strain ATCC 204508 / S288c) (Baker's yeast).